Consider the following 540-residue polypeptide: uncharacterized protein (540 aa).

2 consecutive ABC transporter domains span residues 2–252 and 320–537; these read IAVN…KLSQ and LRVE…LTEL. 34–41 provides a ligand contact to ATP; sequence GANGAGKS.

This sequence belongs to the ABC transporter superfamily.

This is an uncharacterized protein from Bacillus subtilis (strain 168).